The chain runs to 60 residues: Cytotoxin 2 (60 aa).

4 cysteine pairs are disulfide-bonded: C3–C21, C14–C38, C42–C53, and C54–C59.

The protein belongs to the three-finger toxin family. Short-chain subfamily. Type IA cytotoxin sub-subfamily. As to quaternary structure, monomer, or heterodimer with alpha-cobratoxin (AC P01391); disulfide-linked. Expressed by the venom gland.

It localises to the secreted. Its subcellular location is the target cell membrane. Its function is as follows. Monomer: shows cytolytic activity. In terms of biological role, heterodimer: has no cytolytic activity, but retains most of the alpha-cobratoxin capacity to compete with alpha-bungarotoxin for binding to Torpedo and alpha-7/CHRNA7 nicotinic acetylcholine receptors (nAChRs) as well as to Lymnea stagnalis acetylcholine-binding protein. The sequence is that of Cytotoxin 2 from Naja kaouthia (Monocled cobra).